The chain runs to 200 residues: Large ribosomal subunit protein uL4 (200 aa).

The disordered stretch occupies residues 38 to 73 (GRQGTKGQKSRSDVSGGGKRPWRQKGTGRARAGTTR).

Belongs to the universal ribosomal protein uL4 family. As to quaternary structure, part of the 50S ribosomal subunit.

Its function is as follows. One of the primary rRNA binding proteins, this protein initially binds near the 5'-end of the 23S rRNA. It is important during the early stages of 50S assembly. It makes multiple contacts with different domains of the 23S rRNA in the assembled 50S subunit and ribosome. In terms of biological role, forms part of the polypeptide exit tunnel. This chain is Large ribosomal subunit protein uL4, found in Ectopseudomonas mendocina (strain ymp) (Pseudomonas mendocina).